Reading from the N-terminus, the 821-residue chain is Kinetochore protein SLK19 (821 aa).

Disordered stretches follow at residues 1 to 52 (MNEV…SQFV) and 99 to 153 (FDDK…NDKE). Thr-7 is modified (phosphothreonine; by CDC28). Positions 15-51 (QAQQREQNSENCSQERNPRTFNSEPDSSFNSPGSSQF) are enriched in polar residues. Composition is skewed to basic and acidic residues over residues 99 to 122 (FDDKKSDSGTNDDKGGASTSDKHV) and 136 to 153 (SSEKRSDKNVDVDENDKE). A phosphoserine mark is found at Ser-188 and Ser-189. Ser-201 carries the phosphoserine; by CDC28 modification. At Ser-216 the chain carries Phosphoserine. Thr-273 is modified (phosphothreonine). Disordered stretches follow at residues 274 to 298 (PLYETSARESNSNEEGRNDYDDDNQ) and 699 to 720 (EQNNNNNNSVTLSNDQKDRDDE). Phosphoserine is present on Ser-283. Positions 310–821 (AKRNEELTDQ…LLKLLENEKK (512 aa)) form a coiled coil.

Post-translationally, cleaved by ESP1 at the onset of anaphase. Phosphorylated by CDC5/Polo-like kinase at the onset of anaphase. Phosphorylation takes places at proximity to cleavage sites and is required for an efficient cleavage by ESP1. Phosphorylated also by CDC28.

It localises to the chromosome. The protein resides in the centromere. Its subcellular location is the kinetochore. It is found in the cytoplasm. The protein localises to the cytoskeleton. It localises to the microtubule organizing center. The protein resides in the spindle pole body. In terms of biological role, has a role in spindle assembly and stability. Required to ensure a timely exit form mitosis. Essential to maintain pre-anaphase spindle polarity. Associates to the plus ends of the microtubules at the kinetochore and spindle midzone. A component of the FEAR (CDC14 Early Anaphase Release) network which promotes CDC14 release from the nucleolus during early anaphase. Required for proper chromosome segregation during meiosis I where it prevents premature sister chromatid separation. The protein is Kinetochore protein SLK19 (SLK19) of Saccharomyces cerevisiae (strain ATCC 204508 / S288c) (Baker's yeast).